Consider the following 486-residue polypeptide: Histone acetyltransferase type B catalytic subunit DDB_G0274269 (486 aa).

A coiled-coil region spans residues 27–69 (DIEELKNKDNKENKDKENKAHIKDEGEEEEQKEKKEEEEKEDD). Basic and acidic residues predominate over residues 33 to 50 (NKDNKENKDKENKAHIKD). The tract at residues 33-78 (NKDNKENKDKENKAHIKDEGEEEEQKEKKEEEEKEDDGGPISFHPT) is disordered. Residues 189 to 386 (VVFRYHEKLQ…YRISIKKRLY (198 aa)) form the N-acetyltransferase domain. Acetyl-CoA-binding positions include 260–262 (YLI) and 267–273 (QRMGHGK). E299 acts as the Proton donor/acceptor in catalysis. Residues 392-481 (DSEQIEKIKQ…KNYHKTLSSL (90 aa)) adopt a coiled-coil conformation.

The protein belongs to the HAT1 family.

The enzyme catalyses L-lysyl-[protein] + acetyl-CoA = N(6)-acetyl-L-lysyl-[protein] + CoA + H(+). The sequence is that of Histone acetyltransferase type B catalytic subunit DDB_G0274269 from Dictyostelium discoideum (Social amoeba).